The sequence spans 861 residues: Leucine--tRNA ligase (861 aa).

Residues 43 to 53 carry the 'HIGH' region motif; sequence PYPSGKLHMGH. The 'KMSKS' region motif lies at 588–592; it reads KMSKS. Position 591 (Lys-591) interacts with ATP.

This sequence belongs to the class-I aminoacyl-tRNA synthetase family.

Its subcellular location is the cytoplasm. The catalysed reaction is tRNA(Leu) + L-leucine + ATP = L-leucyl-tRNA(Leu) + AMP + diphosphate. This chain is Leucine--tRNA ligase, found in Symbiobacterium thermophilum (strain DSM 24528 / JCM 14929 / IAM 14863 / T).